A 398-amino-acid polypeptide reads, in one-letter code: Phospholipase C (398 aa).

An N-terminal signal peptide occupies residues 1–28 (MKRKICKALICAALATSLWAGASTKVYA). 9 residues coordinate Zn(2+): tryptophan 29, histidine 39, aspartate 84, histidine 96, histidine 154, aspartate 158, histidine 164, histidine 176, and glutamate 180. Residues 29-278 (WDGKIDGTGT…HDVSEGNDPS (250 aa)) enclose the Zn-dependent PLC domain. Positions 275–283 (NDPSVGKNV) are linker. The region spanning 284–398 (KELVAYISTS…ISGNSTYNIK (115 aa)) is the PLAT domain. Ca(2+) contacts are provided by aspartate 297, glycine 299, threonine 300, aspartate 301, aspartate 321, asparagine 322, glycine 324, asparagine 325, aspartate 326, aspartate 364, and alanine 365.

It belongs to the bacterial zinc-metallophospholipase C family. The cofactor is Ca(2+). Requires Zn(2+) as cofactor.

The protein resides in the secreted. The catalysed reaction is a 1,2-diacyl-sn-glycero-3-phosphocholine + H2O = phosphocholine + a 1,2-diacyl-sn-glycerol + H(+). In terms of biological role, bacterial hemolysins are exotoxins that attack blood cell membranes and cause cell rupture. Constitutes an essential virulence factor in gas gangrene. Binds to eukaryotic membranes where it hydrolyzes both phosphatidylcholine and sphingomyelin. The diacylglycerol produced can activate both the arachidonic acid pathway, leading to modulation of the inflammatory response cascade and thrombosis, and protein kinase C, leading to activation of eukaryotic phospholipases and further membrane damage. Acts on human and mouse erythrocytes, but not on rabbit or horse erythrocytes. This chain is Phospholipase C (plc), found in Clostridium perfringens (strain ATCC 13124 / DSM 756 / JCM 1290 / NCIMB 6125 / NCTC 8237 / Type A).